We begin with the raw amino-acid sequence, 279 residues long: Urease accessory protein UreD (279 aa).

It belongs to the UreD family. In terms of assembly, ureD, UreF and UreG form a complex that acts as a GTP-hydrolysis-dependent molecular chaperone, activating the urease apoprotein by helping to assemble the nickel containing metallocenter of UreC. The UreE protein probably delivers the nickel.

Its subcellular location is the cytoplasm. In terms of biological role, required for maturation of urease via the functional incorporation of the urease nickel metallocenter. The chain is Urease accessory protein UreD from Nostoc sp. (strain PCC 7120 / SAG 25.82 / UTEX 2576).